A 394-amino-acid chain; its full sequence is Ceramide synthase 4 (394 aa).

Over 1-31 (MLSSFNEWFWQDRFWLPPNVTWTELEDRDGR) the chain is Lumenal. N19 carries an N-linked (GlcNAc...) asparagine glycan. A helical membrane pass occupies residues 32–52 (VYPHPQDLLAALPLALVLLAM). The tract at residues 67-128 (WLGVRDQTRR…RRRRNQDRPQ (62 aa)) is homeobox-like. A TLC domain is found at 131-332 (KKFCEASWRF…ILRMLYSFMK (202 aa)). 4 helical membrane-spanning segments follow: residues 140–160 (FLFYLSSFVGGLSVLYHESWL), 179–199 (LYWWYLLELGFYLSLLIRLPF), 209–229 (QVIHHFVAVILMTFSYSANLL), and 260–280 (VCDALFLIFSFVFFYTRLVLF). The Last loop motif motif lies at 291-301 (ESISNRGPFFG). Residues 304–324 (FFNGLLMLLQLLHVFWSCLIL) form a helical membrane-spanning segment. At 325 to 394 (RMLYSFMKKG…RLTNRHTTAT (70 aa)) the chain is on the cytoplasmic side. The interval 341-394 (RSDVEESDSSEEAAAAQEPLQLKNGAAGGPRPAPTDGPRSRVAGRLTNRHTTAT) is disordered. A phosphoserine mark is found at S342, S349, and S350.

In terms of processing, phosphorylated at the C-terminus by CK2. Post-translationally, N-glycosylated.

The protein localises to the endoplasmic reticulum membrane. The catalysed reaction is sphinganine + octadecanoyl-CoA = N-(octadecanoyl)-sphinganine + CoA + H(+). It carries out the reaction eicosanoyl-CoA + sphinganine = N-eicosanoylsphinganine + CoA + H(+). The enzyme catalyses docosanoyl-CoA + sphinganine = N-docosanoylsphinganine + CoA + H(+). It catalyses the reaction tetracosanoyl-CoA + sphinganine = N-tetracosanoylsphinganine + CoA + H(+). The catalysed reaction is hexacosanoyl-CoA + sphinganine = N-hexacosanoylsphinganine + CoA + H(+). It carries out the reaction a fatty acyl-CoA + sphing-4-enine = an N-acylsphing-4-enine + CoA + H(+). The enzyme catalyses sphing-4-enine + octadecanoyl-CoA = N-octadecanoylsphing-4-enine + CoA + H(+). It catalyses the reaction hexadecasphinganine + octadecanoyl-CoA = N-octadecanoylhexadecasphinganine + CoA + H(+). It functions in the pathway lipid metabolism; sphingolipid metabolism. Its function is as follows. Ceramide synthase that catalyzes formation of ceramide from sphinganine and acyl-CoA substrates, with high selectivity toward long and very-long chains (C18:0-C22:0) as acyl donor. The chain is Ceramide synthase 4 from Homo sapiens (Human).